The chain runs to 37 residues: M-oxotoxin-Ot2d (37 aa).

In terms of tissue distribution, expressed by the venom gland.

It localises to the secreted. In terms of biological role, disrupts biological membranes, particularly those rich in phosphocholine. Has antimicrobial activity against Gram-negative bacterium E.coli, Gram-positive bacteria B.subtilis and S.aureus, and hemolytic activity against sheep, pig and guinea pig red blood cells. Has insecticidal activity against S.frugiperda ovarian cells by opening non-selective ion channels. Enhances the insecticidal activity of spider venom neurotoxic peptides. In Oxyopes takobius (Lynx spider), this protein is M-oxotoxin-Ot2d.